Consider the following 459-residue polypeptide: GTPase Der (459 aa).

EngA-type G domains lie at 4–169 (PLVA…PEVT) and 179–355 (IAVS…AAHR). GTP contacts are provided by residues 10-17 (GRPNVGKS), 57-61 (DTGGL), 120-123 (NKCE), 185-192 (GRPNVGKS), 232-236 (DTAGI), and 297-300 (NKWD). The KH-like domain occupies 356–441 (KRVPTAVVNE…PIRFLWRGKS (86 aa)).

It belongs to the TRAFAC class TrmE-Era-EngA-EngB-Septin-like GTPase superfamily. EngA (Der) GTPase family. In terms of assembly, associates with the 50S ribosomal subunit.

In terms of biological role, GTPase that plays an essential role in the late steps of ribosome biogenesis. This Synechococcus sp. (strain JA-2-3B'a(2-13)) (Cyanobacteria bacterium Yellowstone B-Prime) protein is GTPase Der.